The following is a 117-amino-acid chain: Hainantoxin-XV.2 (117 aa).

The N-terminal stretch at 1 to 20 (MKLCAVIIASLLVCAAVASS) is a signal peptide. The segment at 18–55 (ASSSDNQKEFAQEKEMTREETQSLGEHEKDDEVTGSEE) is disordered. Positions 21–56 (SDNQKEFAQEKEMTREETQSLGEHEKDDEVTGSEER) are excised as a propeptide. A compositionally biased stretch (basic and acidic residues) spans 23-55 (NQKEFAQEKEMTREETQSLGEHEKDDEVTGSEE). 4 cysteine pairs are disulfide-bonded: Cys58-Cys72, Cys65-Cys78, Cys69-Cys115, and Cys71-Cys91.

Belongs to the neurotoxin 03 (Tx2) family. 02 subfamily. HNTX-XV sub-subfamily. Expressed by the venom gland.

The protein resides in the secreted. Its function is as follows. Putative ion channel inhibitor. The sequence is that of Hainantoxin-XV.2 from Cyriopagopus hainanus (Chinese bird spider).